We begin with the raw amino-acid sequence, 485 residues long: WAS/WASL-interacting protein family member 3 (485 aa).

Pro residues predominate over residues 1-41 (MPVPPPPPPPPPPPPPPPPPLGAPPPPPLGAPPPPPPPGPP). The interval 1–485 (MPVPPPPPPP…QLSLKALPVR (485 aa)) is disordered. Short sequence motifs (profilin-binding motif) lie at residues 3–8 (VPPPPP), 11–16 (PPPPPP), and 31–36 (APPPPP). The WH2 domain maps to 56-73 (GRSALLADIQQGTRLRKV). Arg-57 is subject to Asymmetric dimethylarginine. Positions 69–72 (RLRK) match the RLRK motif. A Phosphoserine modification is found at Ser-161. Positions 176 to 203 (PVPPRPSVPAPPPPTPPPPPPPPLPPAS) are enriched in pro residues. Ser-211 carries the phosphoserine modification. The span at 212 to 246 (PPAPPTKVNPSVVPPPLPCAPPLPPPPPTPPPLPP) shows a compositional bias: pro residues. Positions 247-262 (ASALSDKAVRPQLAPL) are enriched in low complexity. Composition is skewed to pro residues over residues 263 to 278 (HLPPIPPPLPLLPPCG) and 296 to 312 (PPAPPPPPPPPPPPPLP). Ser-392 bears the Phosphoserine mark. A compositionally biased stretch (polar residues) spans 392–405 (SPTTELSSKSQQPG). Basic and acidic residues predominate over residues 415–439 (AIDDFESKFTFHSMEDFPPPDEYKP). The WASP-binding motif motif lies at 424-448 (TFHSMEDFPPPDEYKPCQKIYPSKV).

Interacts with WASL, and monomeric and filamentous actin. Isoform 1 is expressed in brain and testis and isoform 2 is expressed only in brain (at protein level).

Its subcellular location is the cytoplasm. Functionally, may be a regulator of cytoskeletal organization (Potential). May have a role in spermatogenesis. This Mus musculus (Mouse) protein is WAS/WASL-interacting protein family member 3 (Wipf3).